Here is a 261-residue protein sequence, read N- to C-terminus: Imidazole glycerol phosphate synthase subunit HisF (261 aa).

Catalysis depends on residues aspartate 11 and aspartate 130.

This sequence belongs to the HisA/HisF family. In terms of assembly, heterodimer of HisH and HisF.

Its subcellular location is the cytoplasm. The enzyme catalyses 5-[(5-phospho-1-deoxy-D-ribulos-1-ylimino)methylamino]-1-(5-phospho-beta-D-ribosyl)imidazole-4-carboxamide + L-glutamine = D-erythro-1-(imidazol-4-yl)glycerol 3-phosphate + 5-amino-1-(5-phospho-beta-D-ribosyl)imidazole-4-carboxamide + L-glutamate + H(+). It participates in amino-acid biosynthesis; L-histidine biosynthesis; L-histidine from 5-phospho-alpha-D-ribose 1-diphosphate: step 5/9. In terms of biological role, IGPS catalyzes the conversion of PRFAR and glutamine to IGP, AICAR and glutamate. The HisF subunit catalyzes the cyclization activity that produces IGP and AICAR from PRFAR using the ammonia provided by the HisH subunit. In Heliobacterium mobile (Heliobacillus mobilis), this protein is Imidazole glycerol phosphate synthase subunit HisF.